Consider the following 473-residue polypeptide: Protein translocase subunit SecA (473 aa).

Asp127 contributes to the ATP binding site. Positions 424–447 (VAEGKAVHQDTSKQEPKKKQPIRK) are disordered. Zn(2+) contacts are provided by Cys457, Cys459, Cys468, and Cys469.

Belongs to the SecA family. In terms of assembly, monomer and homodimer. Part of the essential Sec protein translocation apparatus which comprises SecA, SecYEG and auxiliary proteins SecDF. Other proteins may also be involved. Zn(2+) is required as a cofactor.

It localises to the cell membrane. Its subcellular location is the cytoplasm. The catalysed reaction is ATP + H2O + cellular proteinSide 1 = ADP + phosphate + cellular proteinSide 2.. Its function is as follows. Part of the Sec protein translocase complex. Interacts with the SecYEG preprotein conducting channel. Has a central role in coupling the hydrolysis of ATP to the transfer of proteins into and across the cell membrane, serving as an ATP-driven molecular motor driving the stepwise translocation of polypeptide chains across the membrane. This chain is Protein translocase subunit SecA, found in Cytobacillus firmus (Bacillus firmus).